Reading from the N-terminus, the 129-residue chain is UPF0325 protein Ent638_0703 (129 aa).

It belongs to the UPF0325 family.

The protein is UPF0325 protein Ent638_0703 of Enterobacter sp. (strain 638).